A 406-amino-acid chain; its full sequence is Cysteine desulfurase (406 aa).

Lys-226 bears the N6-(pyridoxal phosphate)lysine mark. Cys-364 serves as the catalytic Cysteine persulfide intermediate.

This sequence belongs to the class-V pyridoxal-phosphate-dependent aminotransferase family. Csd subfamily. Homodimer. Interacts with SufE and the SufBCD complex composed of SufB, SufC and SufD. The interaction with SufE is required to mediate the direct transfer of the sulfur atom from the S-sulfanylcysteine. Pyridoxal 5'-phosphate serves as cofactor.

It is found in the cytoplasm. The enzyme catalyses (sulfur carrier)-H + L-cysteine = (sulfur carrier)-SH + L-alanine. The catalysed reaction is L-selenocysteine + AH2 = hydrogenselenide + L-alanine + A + H(+). The protein operates within cofactor biosynthesis; iron-sulfur cluster biosynthesis. Cysteine desulfurases mobilize the sulfur from L-cysteine to yield L-alanine, an essential step in sulfur metabolism for biosynthesis of a variety of sulfur-containing biomolecules. Component of the suf operon, which is activated and required under specific conditions such as oxidative stress and iron limitation. Acts as a potent selenocysteine lyase in vitro, that mobilizes selenium from L-selenocysteine. Selenocysteine lyase activity is however unsure in vivo. This is Cysteine desulfurase from Escherichia coli O8 (strain IAI1).